Reading from the N-terminus, the 565-residue chain is Protein priB (565 aa).

Positions cysteine 20–cysteine 50 form a DNA-binding region, zn(2)-C6 fungal-type. 2 disordered regions span residues alanine 82–alanine 170 and asparagine 195–glycine 224. Basic and acidic residues predominate over residues aspartate 90–tyrosine 111. Over residues serine 129–threonine 155 the composition is skewed to low complexity. The span at glycine 203–proline 215 shows a compositional bias: polar residues.

It is found in the nucleus. The sequence is that of Protein priB (priB) from Lentinula edodes (Shiitake mushroom).